Consider the following 326-residue polypeptide: tRNA-modifying protein YgfZ (326 aa).

Residues tryptophan 27 and tryptophan 189 each contribute to the folate site.

This sequence belongs to the tRNA-modifying YgfZ family.

The protein localises to the cytoplasm. Folate-binding protein involved in regulating the level of ATP-DnaA and in the modification of some tRNAs. It is probably a key factor in regulatory networks that act via tRNA modification, such as initiation of chromosomal replication. The chain is tRNA-modifying protein YgfZ from Escherichia coli O139:H28 (strain E24377A / ETEC).